Here is a 1025-residue protein sequence, read N- to C-terminus: Multidrug resistance protein MdtC (1025 aa).

The next 12 helical transmembrane spans lie at 3–23, 333–353, 360–380, 387–407, 431–451, 463–483, 528–548, 853–873, 875–895, 897–917, 953–973, and 984–1004; these read FFAL…AITL, EVEQ…FLFL, IIPA…MYLC, LSLM…IVVL, VGFT…PLLL, FAVT…TLTP, LVGV…ISIP, VILI…LYES, VHPL…LLAL, LFNA…IGIV, PIMM…LSGG, and ITIV…TPVV.

The protein belongs to the resistance-nodulation-cell division (RND) (TC 2.A.6) family. MdtC subfamily. In terms of assembly, part of a tripartite efflux system composed of MdtA, MdtB and MdtC. MdtC forms a heteromultimer with MdtB.

Its subcellular location is the cell inner membrane. In terms of biological role, the MdtABC tripartite complex confers resistance against novobiocin and deoxycholate. In Escherichia fergusonii (strain ATCC 35469 / DSM 13698 / CCUG 18766 / IAM 14443 / JCM 21226 / LMG 7866 / NBRC 102419 / NCTC 12128 / CDC 0568-73), this protein is Multidrug resistance protein MdtC.